The chain runs to 538 residues: Phospho-2-dehydro-3-deoxyheptonate aldolase 1, chloroplastic (538 aa).

Residues 1–74 (MALSSTSTTN…KPSKSSPPAA (74 aa)) constitute a chloroplast transit peptide. The segment at 55-82 (DSNKIPIVSDKPSKSSPPAATATTAPAP) is disordered. A compositionally biased stretch (low complexity) spans 68-82 (KSSPPAATATTAPAP). T75 bears the Blocked amino end (Thr) mark.

Belongs to the class-II DAHP synthase family.

Its subcellular location is the plastid. The protein resides in the chloroplast. It catalyses the reaction D-erythrose 4-phosphate + phosphoenolpyruvate + H2O = 7-phospho-2-dehydro-3-deoxy-D-arabino-heptonate + phosphate. It participates in metabolic intermediate biosynthesis; chorismate biosynthesis; chorismate from D-erythrose 4-phosphate and phosphoenolpyruvate: step 1/7. With respect to regulation, activation by tryptophan (a hysteretic factor). This chain is Phospho-2-dehydro-3-deoxyheptonate aldolase 1, chloroplastic (SHKA), found in Solanum tuberosum (Potato).